The following is a 463-amino-acid chain: Probable transport protein HsrA (463 aa).

Transmembrane regions (helical) follow at residues 10–30 (GLAWVAAMALFMQSLDATILN), 49–69 (MAIIAYSLAVALFIPLTAWAA), 82–102 (VFTFILGSVACAAASNLESLI), 107–127 (IQGIGGAFMMPVARLAIIQAV), 139–159 (MATAGLIGPILGPILGGWLVI), 165–185 (WIFLINIPIGALGILASGSVM), 197–217 (WTGFLLFALGLVGITLGLDLL), 225–245 (SVTYSILVVGILLLVTYCGYA), 267–287 (IIANIFIRLSASGVPFLLPLM), 298–318 (MSGWLLAPIALISVMLKILIG), 328–348 (TTLISSALLMAGSVISMAWLD), 354–374 (TWIICNLMWYGACMSIIFTSI), 393–413 (VLSIVQQVGIGFGIAVSSIIL), and 429–449 (AFSYTFLTSSLFVIALVWSLM).

Belongs to the major facilitator superfamily. EmrB family.

It is found in the cell inner membrane. The protein is Probable transport protein HsrA (hsrA) of Haemophilus influenzae (strain ATCC 51907 / DSM 11121 / KW20 / Rd).